The following is a 678-amino-acid chain: Methionine--tRNA ligase (678 aa).

Positions 18-28 (PYANGPIHLGH) match the 'HIGH' region motif. Zn(2+) contacts are provided by cysteine 149, cysteine 152, cysteine 162, and cysteine 165. Positions 334 to 338 (KMSKS) match the 'KMSKS' region motif. ATP is bound at residue lysine 337. The 102-residue stretch at 577–678 (DFAKVDLRVA…SGATPGMRVM (102 aa)) folds into the tRNA-binding domain.

Belongs to the class-I aminoacyl-tRNA synthetase family. MetG type 1 subfamily. As to quaternary structure, homodimer. Zn(2+) serves as cofactor.

It localises to the cytoplasm. The catalysed reaction is tRNA(Met) + L-methionine + ATP = L-methionyl-tRNA(Met) + AMP + diphosphate. In terms of biological role, is required not only for elongation of protein synthesis but also for the initiation of all mRNA translation through initiator tRNA(fMet) aminoacylation. This is Methionine--tRNA ligase from Marinobacter nauticus (strain ATCC 700491 / DSM 11845 / VT8) (Marinobacter aquaeolei).